A 367-amino-acid chain; its full sequence is THO complex subunit 6 (367 aa).

WD repeat units lie at residues 23–67, 88–129, 157–196, 199–240, 243–283, 285–322, and 324–363; these read IETR…SQSA, AHEG…ESDV, SPMP…IKMT, GHSD…KVIG, DKKS…CVQT, PIPA…LSQI, and CAPC…CTFR.

It belongs to the WD repeat THOC6 family. As to quaternary structure, component of the THO complex, which is composed of THO1, THO2, THO3, THO5, THO6 and THO7. Interacts with ABI5, DDB1A and DWA2.

The protein localises to the nucleus. The protein operates within protein modification; protein ubiquitination. Its function is as follows. Acts as a component of the THO subcomplex of the TREX complex which is thought to couple mRNA transcription, processing and nuclear export. In terms of biological role, component of the CUL4-RBX1-DDB1-DWA1/DWA2 E3 ubiquitin-protein ligase complex that acts as a negative regulator in abscisic acid (ABA) signaling. May function as the substrate recognition module within this complex leading to ABI5 degradation. Functionally redundant with DWA2. This is THO complex subunit 6 (THO6) from Arabidopsis thaliana (Mouse-ear cress).